The chain runs to 264 residues: Zinc import ATP-binding protein ZnuC (264 aa).

The region spanning 20–235 is the ABC transporter domain; that stretch reads VQLKNIEVTF…PNFIHFFGDQ (216 aa). 52 to 59 contacts ATP; sequence GPNGGGKS.

This sequence belongs to the ABC transporter superfamily. Zinc importer (TC 3.A.1.15.5) family. In terms of assembly, the complex is composed of two ATP-binding proteins (ZnuC), two transmembrane proteins (ZnuB) and a solute-binding protein (ZnuA).

The protein localises to the cell inner membrane. It carries out the reaction Zn(2+)(out) + ATP(in) + H2O(in) = Zn(2+)(in) + ADP(in) + phosphate(in) + H(+)(in). Part of the ABC transporter complex ZnuABC involved in zinc import. Responsible for energy coupling to the transport system. This is Zinc import ATP-binding protein ZnuC from Haemophilus ducreyi (strain 35000HP / ATCC 700724).